We begin with the raw amino-acid sequence, 418 residues long: Triacylglycerol lipase 2 (418 aa).

Positions 1–31 (MAGSVMVPSVSIGLALSVLIFFALSLKTLEA) are cleaved as a signal peptide. Residue Asn158 is glycosylated (N-linked (GlcNAc...) asparagine). The active-site Nucleophile is the Ser190. Asn286 and Asn342 each carry an N-linked (GlcNAc...) asparagine glycan. Catalysis depends on charge relay system residues Asp360 and His393.

The protein belongs to the AB hydrolase superfamily. Lipase family.

The protein localises to the secreted. The enzyme catalyses a triacylglycerol + H2O = a diacylglycerol + a fatty acid + H(+). Functionally, triacylglycerol (TAG) lipase. May be involved for TAG storage breakdown during seed germination. In Arabidopsis thaliana (Mouse-ear cress), this protein is Triacylglycerol lipase 2 (LIP2).